Here is a 374-residue protein sequence, read N- to C-terminus: MRAPMPQKEQAPRMDTSPPEERLEKQNEKLNNQEEEMEFKELDDLREALANLRGLSEEERSEKAMLRSRIEDQSQLICILKRRSDEALERCQILELLNAELEEKMMQEAEKLKAQGEYTRKLEERFMTLAANHELMIRFKDEYKSENIKLREENEKLKLENSSLFSQALKDEEAKVLQLTVRCEALTGELETLKERCAQDACQAQAREKELLELQSQQACTHTKKTEQLRSQLQTLKQQHQQAVEQMAEAEETHSSLSQELQARLQTVTREKEELLQLSMERGKVLQNKQAEIRQLEEKLEIANEGRKHALERFKQEAVAVDSNLRVRELQCKVDGIQKAYDELRLQSEAFKKHSLDLLSKERELNGKLRHLFP.

The tract at residues 1 to 38 (MRAPMPQKEQAPRMDTSPPEERLEKQNEKLNNQEEEME) is disordered. The residue at position 16 (Thr16) is a Phosphothreonine. Basic and acidic residues predominate over residues 19 to 32 (PEERLEKQNEKLNN). A coiled-coil region spans residues 19–350 (PEERLEKQNE…YDELRLQSEA (332 aa)).

This sequence belongs to the CCDC89 family. In terms of assembly, interacts with HEY1.

It is found in the cytoplasm. Its subcellular location is the nucleus. This chain is Coiled-coil domain-containing protein 89 (CCDC89), found in Macaca fascicularis (Crab-eating macaque).